The sequence spans 288 residues: Pyridoxal kinase PdxY (288 aa).

Residues Ser-12 and 47 to 48 (TQ) each bind substrate. Residues Asp-114, Glu-151, Lys-184, and 211–214 (RPLL) each bind ATP. Asp-225 lines the substrate pocket.

This sequence belongs to the pyridoxine kinase family. PdxY subfamily. In terms of assembly, homodimer. The cofactor is Mg(2+).

It catalyses the reaction pyridoxal + ATP = pyridoxal 5'-phosphate + ADP + H(+). Its pathway is cofactor metabolism; pyridoxal 5'-phosphate salvage; pyridoxal 5'-phosphate from pyridoxal: step 1/1. In terms of biological role, pyridoxal kinase involved in the salvage pathway of pyridoxal 5'-phosphate (PLP). Catalyzes the phosphorylation of pyridoxal to PLP. In Pseudomonas savastanoi pv. phaseolicola (strain 1448A / Race 6) (Pseudomonas syringae pv. phaseolicola (strain 1448A / Race 6)), this protein is Pyridoxal kinase PdxY.